Consider the following 327-residue polypeptide: Probable protein phosphatase 2C 59 (327 aa).

Residues Met1–Cys24 form the signal peptide. One can recognise a PPM-type phosphatase domain in the interval Ser64–Phe310. Mn(2+)-binding residues include Asp100, Gly101, Asp262, and Asp301.

This sequence belongs to the PP2C family. It depends on Mg(2+) as a cofactor. Mn(2+) serves as cofactor.

The catalysed reaction is O-phospho-L-seryl-[protein] + H2O = L-seryl-[protein] + phosphate. It catalyses the reaction O-phospho-L-threonyl-[protein] + H2O = L-threonyl-[protein] + phosphate. The polypeptide is Probable protein phosphatase 2C 59 (Oryza sativa subsp. japonica (Rice)).